The chain runs to 624 residues: MVASEIKSPVSVPETPGSSSVHHRKQLSVFFIESDNRRLALGRGYTGGTTPVNIHGKPIANLSKTGGWIAAFFIFGNEMAERMAYFGLSVNMVAFMFYVMHRPFESSSNAVNNFLGISQASSVLGGFLADAYLGRYWTIAIFTTMYLVGLIGITLGASLKMFVPDQSNCGQLSLLLGNCEEAKSWQMLYLYTVLYITGFGAAGIRPCVSSFGADQFDEKSKDYKTHLDRFFNFFYLSVTLGAIIAFTLVVYVQMELGWGMAFGTLAVAMGISNALFFAGTPLYRHRLPGGSPLTRVAQVLVAAFRKRNAAFTSSEFIGLYEVPGLKSAINGSRKIPHSNDFIWLDKAALELKEDGLEPSPWKLCTVTQVEEVKILIRLIPIPTCTIMLSLVLTEYLTLSVQQAYTLNTHIQHLKLPVTCMPVFPGLSIFLILSLYYSVFVPITRRITGNPHGASQLQRVGIGLAVSIISVAWAGLFENYRRHYAIQNGFEFNFLTQMPDLTAYWLLIQYCLIGIAEVFCIVGLLEFLYEEAPDAMKSIGSAYAALAGGLGCFAATILNNIVKAATRDSDGKSWLSQNINTGRFDCLYWLLTLLSFLNFCVFLWSAHRYKYRAIESEEDKSSAVL.

A disordered region spans residues 1–20; sequence MVASEIKSPVSVPETPGSSS. Helical transmembrane passes span 83–100 and 114–134; these read MAYF…FYVM and FLGI…AYLG. A Phosphothreonine modification is found at Thr-138. Transmembrane regions (helical) follow at residues 139 to 159, 184 to 204, 230 to 250, 258 to 278, 378 to 398, 422 to 442, 459 to 479, 504 to 524, 537 to 557, and 585 to 605; these read IAIF…GASL, SWQM…AAGI, FFNF…TLVV, WGMA…LFFA, LIPI…YLTL, VFPG…FVPI, VGIG…FENY, WLLI…VGLL, SIGS…ATIL, and CLYW…LWSA.

This sequence belongs to the major facilitator superfamily. Proton-dependent oligopeptide transporter (POT/PTR) (TC 2.A.17) family. In terms of tissue distribution, expressed in flower and siliques.

The protein resides in the membrane. In Arabidopsis thaliana (Mouse-ear cress), this protein is Protein NRT1/ PTR FAMILY 6.1 (NPF6.1).